A 284-amino-acid polypeptide reads, in one-letter code: MLRVAVPNKGALSEPATEILAEAGYRRRTDSKDLTVIDPVNNVEFFFLRPKDIAIYVGSGELDFGITGRDLVCDSGAQVRERLALGFGSSSFRYAAPAGRNWTTADLAGMRIATAYPNLVRKDLATKGIEATVIRLDGAVEISVQLGVADAIADVVGSGRTLSQHDLVAFGEPLCDSEAVLIERAGTDGQDQTEARDQLVARVQGVVFGQQYLMLDYDCPRSALKKATAITPGLESPTIAPLADPDWVAIRALVPRRDVNGIMDELAAIGAKAILASDIRFCRF.

It belongs to the ATP phosphoribosyltransferase family. Long subfamily. As to quaternary structure, equilibrium between an active dimeric form, an inactive hexameric form and higher aggregates. Interconversion between the various forms is largely reversible and is influenced by the natural substrates and inhibitors of the enzyme. The cofactor is Mg(2+).

It is found in the cytoplasm. The enzyme catalyses 1-(5-phospho-beta-D-ribosyl)-ATP + diphosphate = 5-phospho-alpha-D-ribose 1-diphosphate + ATP. It functions in the pathway amino-acid biosynthesis; L-histidine biosynthesis; L-histidine from 5-phospho-alpha-D-ribose 1-diphosphate: step 1/9. With respect to regulation, feedback inhibited by histidine. Catalyzes the condensation of ATP and 5-phosphoribose 1-diphosphate to form N'-(5'-phosphoribosyl)-ATP (PR-ATP). Has a crucial role in the pathway because the rate of histidine biosynthesis seems to be controlled primarily by regulation of HisG enzymatic activity. The protein is ATP phosphoribosyltransferase (hisG) of Mycobacterium bovis (strain ATCC BAA-935 / AF2122/97).